Reading from the N-terminus, the 68-residue chain is Protein transport protein Sec61 gamma-2 subunit (68 aa).

The Cytoplasmic segment spans residues 1-32; it reads MDKVVKFAEPGRAFAKDSIRLVKRCTKPDRKE. A helical membrane pass occupies residues 33-61; sequence FQKIAIATAVGFCIMGFIGFFVKLIHIPI. Over 62-68 the chain is Extracellular; sequence NNIIVGS.

Belongs to the SecE/SEC61-gamma family. Heterotrimeric complex composed of SEC61-alpha, SEC61-beta and SEC61-gamma.

Its subcellular location is the endoplasmic reticulum membrane. Necessary for protein translocation in the endoplasmic reticulum. This is Protein transport protein Sec61 gamma-2 subunit (Sec61gamma) from Drosophila melanogaster (Fruit fly).